A 154-amino-acid chain; its full sequence is 6,7-dimethyl-8-ribityllumazine synthase (154 aa).

Residues Phe-22, 56–58 (AFE), and 80–82 (AVI) contribute to the 5-amino-6-(D-ribitylamino)uracil site. 85 to 86 (AT) lines the (2S)-2-hydroxy-3-oxobutyl phosphate pocket. His-88 functions as the Proton donor in the catalytic mechanism. Phe-113 contacts 5-amino-6-(D-ribitylamino)uracil. Position 127 (Arg-127) interacts with (2S)-2-hydroxy-3-oxobutyl phosphate.

This sequence belongs to the DMRL synthase family. Forms an icosahedral capsid composed of 60 subunits, arranged as a dodecamer of pentamers.

The catalysed reaction is (2S)-2-hydroxy-3-oxobutyl phosphate + 5-amino-6-(D-ribitylamino)uracil = 6,7-dimethyl-8-(1-D-ribityl)lumazine + phosphate + 2 H2O + H(+). The protein operates within cofactor biosynthesis; riboflavin biosynthesis; riboflavin from 2-hydroxy-3-oxobutyl phosphate and 5-amino-6-(D-ribitylamino)uracil: step 1/2. Catalyzes the formation of 6,7-dimethyl-8-ribityllumazine by condensation of 5-amino-6-(D-ribitylamino)uracil with 3,4-dihydroxy-2-butanone 4-phosphate. This is the penultimate step in the biosynthesis of riboflavin. This chain is 6,7-dimethyl-8-ribityllumazine synthase, found in Geobacillus thermodenitrificans (strain NG80-2).